We begin with the raw amino-acid sequence, 446 residues long: G patch domain-containing protein 4 (446 aa).

Residue Met1 is modified to N-acetylmethionine. Residue Thr4 is modified to Phosphothreonine. In terms of domain architecture, G-patch spans Gly11–Ala57. Lys46 participates in a covalent cross-link: Glycyl lysine isopeptide (Lys-Gly) (interchain with G-Cter in SUMO2). Residue Thr116 is modified to Phosphothreonine. 2 disordered regions span residues Thr116–Pro140 and Gln188–Asp446. Residues Ser128, Ser130, and Ser139 each carry the phosphoserine modification. The stretch at Thr166–Lys251 forms a coiled coil. The segment covering Ala219–Ile237 has biased composition (basic and acidic residues). Residues Arg238–Gln248 show a composition bias toward basic residues. Composition is skewed to basic and acidic residues over residues Glu249–Ala268, His297–Ala328, Arg363–Ser375, and Leu392–Ala409. Composition is skewed to basic residues over residues Arg416–Lys427 and Lys437–Asp446.

This is G patch domain-containing protein 4 (GPATCH4) from Homo sapiens (Human).